The chain runs to 129 residues: Cuticle protein 12.5 (129 aa).

Repeat copies occupy residues 7–10 (AAPA), 15–18 (AAPA), 23–26 (AAPA), 28–31 (AAPV), 37–40 (AAPA), 67–70 (AAPA), 79–82 (AAPA), 91–94 (AAPA), 103–106 (AAPA), and 117–120 (AAPA).

Its function is as follows. Component of the cuticle of migratory locust which contains more than 100 different structural proteins. This is Cuticle protein 12.5 from Locusta migratoria (Migratory locust).